The sequence spans 127 residues: Protein ApaG (127 aa).

One can recognise an ApaG domain in the interval 3-127 (DDPRYRVEVE…FVLSVPRTLH (125 aa)).

This chain is Protein ApaG, found in Xanthomonas euvesicatoria pv. vesicatoria (strain 85-10) (Xanthomonas campestris pv. vesicatoria).